An 89-amino-acid chain; its full sequence is U-scoloptoxin(11)-Sm4a (89 aa).

An N-terminal signal peptide occupies residues 1 to 17 (MFFKLVLVSAVAIQALS).

This sequence belongs to the scoloptoxin-11 family. Post-translationally, contains 3 disulfide bonds. In terms of tissue distribution, expressed by the venom gland.

The protein resides in the secreted. This chain is U-scoloptoxin(11)-Sm4a, found in Scolopendra morsitans (Tanzanian blue ringleg centipede).